Consider the following 365-residue polypeptide: Phospho-N-acetylmuramoyl-pentapeptide-transferase (365 aa).

Helical transmembrane passes span 22 to 42 (YISVRIIMISITSLLITLALG), 74 to 94 (TMGGVLILSSVIISCLLWGDL), 95 to 115 (TSIYLWILILVVIFFGAIGFF), 133 to 153 (YKFALQSIFSIVLAIVLFYLL), 168 to 188 (SLYIPMGIVIFVVLAFFIING), 201 to 221 (GLAIVPVVLVAAGLGIYAYIE), 240 to 260 (LAEVAVFCAAVCGSGLAFLWF), 267 to 287 (VFMGDVGSLTLGAVLGVIAVM), 292 to 312 (LIFFIMGLLFVVEALSVMLQV), and 342 to 362 (KVVIRFWIISLILFLIGLAAI).

The protein belongs to the glycosyltransferase 4 family. MraY subfamily. Mg(2+) is required as a cofactor.

The protein localises to the cell inner membrane. The enzyme catalyses UDP-N-acetyl-alpha-D-muramoyl-L-alanyl-gamma-D-glutamyl-meso-2,6-diaminopimeloyl-D-alanyl-D-alanine + di-trans,octa-cis-undecaprenyl phosphate = di-trans,octa-cis-undecaprenyl diphospho-N-acetyl-alpha-D-muramoyl-L-alanyl-D-glutamyl-meso-2,6-diaminopimeloyl-D-alanyl-D-alanine + UMP. It functions in the pathway cell wall biogenesis; peptidoglycan biosynthesis. Catalyzes the initial step of the lipid cycle reactions in the biosynthesis of the cell wall peptidoglycan: transfers peptidoglycan precursor phospho-MurNAc-pentapeptide from UDP-MurNAc-pentapeptide onto the lipid carrier undecaprenyl phosphate, yielding undecaprenyl-pyrophosphoryl-MurNAc-pentapeptide, known as lipid I. The polypeptide is Phospho-N-acetylmuramoyl-pentapeptide-transferase (Francisella tularensis subsp. tularensis (strain WY96-3418)).